The following is a 704-amino-acid chain: Elongation factor G (704 aa).

Positions 6 to 282 (NKVRNIGIMA…AVIDYLPTPL (277 aa)) constitute a tr-type G domain. GTP-binding positions include 15-22 (AHIDAGKT), 79-83 (DTPGH), and 133-136 (NKMD).

The protein belongs to the TRAFAC class translation factor GTPase superfamily. Classic translation factor GTPase family. EF-G/EF-2 subfamily.

The protein resides in the cytoplasm. Its function is as follows. Catalyzes the GTP-dependent ribosomal translocation step during translation elongation. During this step, the ribosome changes from the pre-translocational (PRE) to the post-translocational (POST) state as the newly formed A-site-bound peptidyl-tRNA and P-site-bound deacylated tRNA move to the P and E sites, respectively. Catalyzes the coordinated movement of the two tRNA molecules, the mRNA and conformational changes in the ribosome. This is Elongation factor G from Corynebacterium diphtheriae (strain ATCC 700971 / NCTC 13129 / Biotype gravis).